A 670-amino-acid polypeptide reads, in one-letter code: UvrABC system protein B (670 aa).

The Helicase ATP-binding domain maps to 51–433; the sequence is EGLKKREQFQ…SARIVEQIIR (383 aa). 64–71 serves as a coordination point for ATP; that stretch reads GVTGSGKT. A Beta-hairpin motif is present at residues 117 to 140; sequence YYDYYQPESYLPAKDQYIEKDAQI. Positions 453–612 constitute a Helicase C-terminal domain; that stretch reads DVMQEIRKIV…IVPKTIRKPI (160 aa). The UVR domain maps to 631–666; sequence PNVIIELDAEMREAADRLDFERAIQLRELIKKLEKE.

This sequence belongs to the UvrB family. As to quaternary structure, forms a heterotetramer with UvrA during the search for lesions. Interacts with UvrC in an incision complex.

The protein resides in the cytoplasm. Functionally, the UvrABC repair system catalyzes the recognition and processing of DNA lesions. A damage recognition complex composed of 2 UvrA and 2 UvrB subunits scans DNA for abnormalities. Upon binding of the UvrA(2)B(2) complex to a putative damaged site, the DNA wraps around one UvrB monomer. DNA wrap is dependent on ATP binding by UvrB and probably causes local melting of the DNA helix, facilitating insertion of UvrB beta-hairpin between the DNA strands. Then UvrB probes one DNA strand for the presence of a lesion. If a lesion is found the UvrA subunits dissociate and the UvrB-DNA preincision complex is formed. This complex is subsequently bound by UvrC and the second UvrB is released. If no lesion is found, the DNA wraps around the other UvrB subunit that will check the other stand for damage. The sequence is that of UvrABC system protein B from Methanosarcina acetivorans (strain ATCC 35395 / DSM 2834 / JCM 12185 / C2A).